A 492-amino-acid chain; its full sequence is Probable cobyric acid synthase (492 aa).

In terms of domain architecture, GATase cobBQ-type spans 252 to 444 (PIEVNVVKFS…FHGILENFEF (193 aa)). Cys330 functions as the Nucleophile in the catalytic mechanism. Residue His436 is part of the active site.

It belongs to the CobB/CobQ family. CobQ subfamily.

It functions in the pathway cofactor biosynthesis; adenosylcobalamin biosynthesis. Its function is as follows. Catalyzes amidations at positions B, D, E, and G on adenosylcobyrinic A,C-diamide. NH(2) groups are provided by glutamine, and one molecule of ATP is hydrogenolyzed for each amidation. The chain is Probable cobyric acid synthase from Methanococcus maripaludis (strain DSM 14266 / JCM 13030 / NBRC 101832 / S2 / LL).